A 348-amino-acid chain; its full sequence is UDP-3-O-acylglucosamine N-acyltransferase (348 aa).

Histidine 243 (proton acceptor) is an active-site residue.

This sequence belongs to the transferase hexapeptide repeat family. LpxD subfamily. As to quaternary structure, homotrimer.

The catalysed reaction is a UDP-3-O-[(3R)-3-hydroxyacyl]-alpha-D-glucosamine + a (3R)-hydroxyacyl-[ACP] = a UDP-2-N,3-O-bis[(3R)-3-hydroxyacyl]-alpha-D-glucosamine + holo-[ACP] + H(+). It functions in the pathway bacterial outer membrane biogenesis; LPS lipid A biosynthesis. Functionally, catalyzes the N-acylation of UDP-3-O-acylglucosamine using 3-hydroxyacyl-ACP as the acyl donor. Is involved in the biosynthesis of lipid A, a phosphorylated glycolipid that anchors the lipopolysaccharide to the outer membrane of the cell. The protein is UDP-3-O-acylglucosamine N-acyltransferase of Hahella chejuensis (strain KCTC 2396).